The sequence spans 522 residues: MSNRVIIFDTTLRDGEQALAASLSVKEKLQIAMALERLGVDVMEVGFPVSSPGDFESVQTIARTIKNSRVCALSRALEKDIDAAAQALSVAEQFRIHTFISTSTIHVESKLKRSFEQVLEMAVGAVKYARRFTDDVEFSCEDAGRTPIDNLCRMVEAAIHAGARTINIPDTVGYTVPSEFGGIIQTLFNRVPNIDQAIISVHCHDDLGMSVANSITAVQHGARQIECTMNGIGERAGNCSLEEIAMILATRKNLLGVETGINAKEIHRTSNLVSQLCNMPIQSNKAIVGANAFTHSSGIHQDGMLKAQNTYEIMTPESIGLNRNNLNMTSRSGRHVIKHRMEEMGYSEQNYNLDALYEQFLHLADKKGQVFDYDLEALAFMEAQAAEDNFYQLQQLVVQSDSTEGVATATVRIDVGGEIKTEAATGNGPVDAAYNAIARATDRRIDIISYKLSAKGEGQNALGQVDITAVYHEQNFHGVGLATDVVEASARALVHVMNLTCRADKVADYKQNMHKNRELGGV.

Positions 5–267 constitute a Pyruvate carboxyltransferase domain; it reads VIIFDTTLRD…ETGINAKEIH (263 aa). Mn(2+) is bound by residues Asp-14, His-202, His-204, and Asn-238. Residues 392-522 are regulatory domain; sequence QLQQLVVQSD…MHKNRELGGV (131 aa).

The protein belongs to the alpha-IPM synthase/homocitrate synthase family. LeuA type 1 subfamily. Homodimer. Requires Mn(2+) as cofactor.

Its subcellular location is the cytoplasm. It carries out the reaction 3-methyl-2-oxobutanoate + acetyl-CoA + H2O = (2S)-2-isopropylmalate + CoA + H(+). The protein operates within amino-acid biosynthesis; L-leucine biosynthesis; L-leucine from 3-methyl-2-oxobutanoate: step 1/4. In terms of biological role, catalyzes the condensation of the acetyl group of acetyl-CoA with 3-methyl-2-oxobutanoate (2-ketoisovalerate) to form 3-carboxy-3-hydroxy-4-methylpentanoate (2-isopropylmalate). The chain is 2-isopropylmalate synthase from Shewanella sp. (strain MR-7).